Here is a 757-residue protein sequence, read N- to C-terminus: MLQRFITSLMLLPFPGSALAALQNQDAPQHMTCTVAQPTESMIGAVQLQKTEAGTIGVESRSAEILANEKAYFTGNVIIQRNGQWLSTSKATIDQQRGEILASDGITFNDGYLSVTGDSLSLDLNDDQAKLYNSDYRLQNHNARGHAELLSLSRQEVLLQDSSFTTCPGETPAWQLRAERIEINETSDFGEAWHARFELFDVPVLYLPYFNFPLSDARKTGLLYPTFDSSSNSGFEVEVPYYFNIAPNMDATIAPVYMSERGTMMKGEYRYLFEQNAGQFNLEYLGNDDTRIANKKRYLWHVQHSAQINQDLSFYLDATEISDDNYLNDFGSDFAGRADTHLYRVAQLDYDNENWTAQLRTEDYELIGDYRSPYRTLPQLSIDYNTGDFTGFSASLYNELTYFQNQDQTREYATRAHIEPSIQYRFEKPAFDTEAELSYLYTRYWQESPDANITEEVTRTLPRARVRARLHLERAIELGDSQYRQTLSPQIQYLYVPYENQQNIGIYDTSLLQDDYHGLFRSRRFSGLDRIAEANQITYGVSSSLFTQNEREVLRASIGQIYNINDSRTQLFASDEETTTSSNSEWVADINWAVDENWSIRSSIQYDTELNTTRKSQTAVEFRKDESNLIQVSHRTATNILNNDIEQVGTQAVWSANSRWQVASNVFYDLTHDRLNDAMVGIQYSSCCWALRVSAYRRINRDLEPAFSATQINGETQFDNGISIQFIISGLASDSSGLINMLEKSTYGYRRPFYLSN.

Positions 1 to 20 are cleaved as a signal peptide; the sequence is MLQRFITSLMLLPFPGSALA.

This sequence belongs to the LptD family. As to quaternary structure, component of the lipopolysaccharide transport and assembly complex. Interacts with LptE and LptA.

It localises to the cell outer membrane. Functionally, together with LptE, is involved in the assembly of lipopolysaccharide (LPS) at the surface of the outer membrane. In Idiomarina loihiensis (strain ATCC BAA-735 / DSM 15497 / L2-TR), this protein is LPS-assembly protein LptD.